We begin with the raw amino-acid sequence, 43 residues long: Omega-agatoxin-Aa3c (43 aa).

Disulfide bonds link Cys2–Cys19, Cys9–Cys25, and Cys27–Cys38.

Belongs to the neurotoxin 04 (omega-agtx) family. 03 (type II/III omega-agtx) subfamily. Expressed by the venom gland.

The protein localises to the secreted. In terms of biological role, omega-agatoxins are antagonists of voltage-gated calcium channels (Cav). This chain is Omega-agatoxin-Aa3c, found in Agelenopsis aperta (North American funnel-web spider).